We begin with the raw amino-acid sequence, 231 residues long: MANKVLRKVTHCVFDMDGLLLDTERLYTVATEMILEPYGKTYPFEIKEQVMGLQTEPLARFMVEHYELPMSWEEYARQQRANTEILMRNAQLMPGAERLLRHLHANKVPFCLATSSGADMVELKTAQHRELFSLFNHKVCGSSDKEVVNGKPAPDIFLVAAGRFGVPPKPSDCLVFEDSPNGVTAANSAGMQVVMVPDPRLSQEKTSHATQVLASLADFKPEQFGLPAFTD.

Catalysis depends on Asp-15, which acts as the Nucleophile. Mg(2+) contacts are provided by Asp-15 and Asp-17. Asp-17 (proton donor) is an active-site residue.

The protein belongs to the HAD-like hydrolase superfamily. CbbY/CbbZ/Gph/YieH family. It depends on Mg(2+) as a cofactor.

It catalyses the reaction psi-UMP + H2O = pseudouridine + phosphate. Functionally, dephosphorylates pseudouridine 5'-phosphate, a potential intermediate in rRNA degradation. This chain is Probable pseudouridine-5'-phosphatase (Gs1l), found in Drosophila melanogaster (Fruit fly).